The chain runs to 175 residues: Arsenite oxidase subunit AioB (175 aa).

Positions 1–32 (MSDTINLTRRGFLKVSGSGVAVAATLSPIASA) form a signal peptide, tat-type signal. A Rieske domain is found at 62 to 158 (NEPVSFTYPD…LRYDEASDAL (97 aa)). Residues cysteine 102, histidine 104, cysteine 120, and histidine 123 each coordinate [2Fe-2S] cluster. The cysteines at positions 107 and 122 are disulfide-linked.

The protein belongs to the AOX family. In terms of assembly, heterodimer consisting of a large and a small subunit. [2Fe-2S] cluster serves as cofactor. In terms of processing, predicted to be exported by the Tat system. The position of the signal peptide cleavage has not been experimentally proven.

It carries out the reaction 2 oxidized [azurin] + arsenite + H2O = 2 reduced [azurin] + arsenate + 3 H(+). Functionally, involved in the detoxification of arsenic. Oxidizes As(III)O3(3-) (arsenite) to the somewhat less toxic As(V)O4(3-) (arsenate). The chain is Arsenite oxidase subunit AioB (aioB) from Alcaligenes faecalis.